A 509-amino-acid chain; its full sequence is ATP synthase subunit beta, mitochondrial (509 aa).

Residues 1–32 (MVLPRLIPRLSRSAFKVAQANNRVFNAPFRGM) constitute a mitochondrion transit peptide. 189-196 (GAGVGKTV) contributes to the ATP binding site.

As to quaternary structure, F-type ATP synthases have 2 components, the catalytic core F(1) and the membrane-embedded component F(0), linked together by a central stalk and a peripheral stalk. The central stalk, also called rotor shaft, is often seen as part of F(1). The peripheral stalk is seen as part of F(0). F(0) contains the membrane channel next to the rotor. F-type ATP synthases form dimers but each monomer functions independently in ATP generation. The dimer consists of 17 different polypeptides: ATP1 (subunit alpha, 3 molecules per monomer, part of F(1)), ATP2 (subunit beta, 3 copies per monomer, part of F(1)), ATP3 (subunit gamma, part of the central stalk), ATP4 (subunit b, part of the peripheral stalk), ATP5/OSCP (subunit 5/OSCP, part of the peripheral stalk), ATP6 (subunit a, part of the peripheral stalk), ATP7 (subunit d, part of the peripheral stalk), ATP8 (subunit 8, part of the peripheral stalk), OLI1 (subunit c, part of the rotor, 10 molecules per monomer), ATP14 (subunit h, part of the peripheral stalk), ATP15 (subunit epsilon, part of the central stalk), ATP16 (subunit delta, part of the central stalk), ATP17 (subunit f, part of the peripheral stalk), ATP18 (subunit i/j, part of the peripheral stalk), ATP19 (subunit k, dimer-specific, at interface between monomers), ATP20 (subunit g, at interface between monomers), TIM11 (subunit e, at interface between monomers).

Its subcellular location is the mitochondrion inner membrane. It catalyses the reaction ATP + H2O + 4 H(+)(in) = ADP + phosphate + 5 H(+)(out). In terms of biological role, mitochondrial membrane ATP synthase (F(1)F(0) ATP synthase or Complex V) produces ATP from ADP in the presence of a proton gradient across the membrane which is generated by electron transport complexes of the respiratory chain. F-type ATP synthases consist of two structural domains, F(1) - containing the extramembraneous catalytic core, and F(0) - containing the membrane proton channel, linked together by a central stalk and a peripheral stalk. During catalysis, ATP synthesis in the catalytic domain of F(1) is coupled via a rotary mechanism of the central stalk subunits to proton translocation. Subunits alpha/ATP1 and beta/ATP2 form the catalytic core in F(1). Rotation of the central stalk against the surrounding alpha/ATP1(3)beta/ATP2(3) subunits leads to hydrolysis of ATP in three separate catalytic sites on the beta/ATP2 subunits. The chain is ATP synthase subunit beta, mitochondrial from Yarrowia lipolytica (strain CLIB 122 / E 150) (Yeast).